The primary structure comprises 236 residues: Small ribosomal subunit protein uS3 (236 aa).

The KH type-2 domain maps to 39–107 (IREILHKELK…DVVINIVEIR (69 aa)). Residues 213–236 (MAQDKRMNEGGGESPSPRSRRDAA) form a disordered region.

This sequence belongs to the universal ribosomal protein uS3 family. In terms of assembly, part of the 30S ribosomal subunit. Forms a tight complex with proteins S10 and S14.

Binds the lower part of the 30S subunit head. Binds mRNA in the 70S ribosome, positioning it for translation. The sequence is that of Small ribosomal subunit protein uS3 from Bradyrhizobium sp. (strain ORS 278).